An 87-amino-acid polypeptide reads, in one-letter code: Antitoxin YefM (87 aa).

It belongs to the phD/YefM antitoxin family. In terms of assembly, forms a complex with YoeB which inhibits its toxin activity.

Its function is as follows. Antitoxin component of a type II toxin-antitoxin (TA) system. A probable antitoxin for the putative mRNA interferase YeoB. This Streptomyces coelicolor (strain ATCC BAA-471 / A3(2) / M145) protein is Antitoxin YefM.